The following is a 196-amino-acid chain: MAAIRKKLVVVGDGACGKTCLLIVFSKDEFPEVYVPTVFENYVADIEVDGKQVELALWDTAGQEDYDRLRPLSYPDTDVILMCFSVDSPDSLENIPEKWVPEVKHFCPNVPIILVANKKDLRSDEHVRTELARMKQEPVRTDDGRAMAVRIQAYDYLECSAKTKEGVREVFETATRAALQKRYGSQNGCINCCKVL.

Position 12-19 (12-19) interacts with GTP; that stretch reads GDGACGKT. An O-linked (GlcNAc) tyrosine; by Photorhabdus PAU_02230 glycan is attached at tyrosine 34. Residues 34–42 carry the Effector region motif; sequence YVPTVFENY. A (Microbial infection) O-linked (Glc) threonine; by C.difficile toxins TcdA and TcdB glycan is attached at threonine 37. Position 41 is an ADP-ribosylasparagine; by botulinum toxin (asparagine 41). GTP contacts are provided by residues 59-63 and 117-120; these read DTAGQ and NKKD. A Phosphotyrosine modification is found at tyrosine 154. 2 S-palmitoyl cysteine lipidation sites follow: cysteine 189 and cysteine 192. Cysteine 193 carries the post-translational modification Cysteine methyl ester. The S-farnesyl cysteine; in plasma membrane form moiety is linked to residue cysteine 193. Cysteine 193 carries the S-geranylgeranyl cysteine; in endosomal form lipid modification. A propeptide spans 194-196 (removed in mature form); sequence KVL.

The protein belongs to the small GTPase superfamily. Rho family. Binds ROCK1 and ROCK2. Also binds PKN1/PRK1. Interacts with ARGGEF3. Interacts with RTKN. Interacts with AKAP13. Interacts with RIPOR1. Prenylation specifies the subcellular location of RHOB. The farnesylated form is localized to the plasma membrane while the geranylgeranylated form is localized to the endosome. In terms of processing, (Microbial infection) Glycosylated at Tyr-34 by Photorhabdus asymbiotica toxin PAU_02230. Mono-O-GlcNAcylation by PAU_02230 inhibits downstream signaling by an impaired interaction with diverse regulator and effector proteins of Rho and leads to actin disassembly. Post-translationally, (Microbial infection) Glucosylated at Thr-37 by C.difficile toxins TcdA and TcdB in the colonic epithelium. Monoglucosylation completely prevents the recognition of the downstream effector, blocking the GTPases in their inactive form, leading to actin cytoskeleton disruption.

It localises to the late endosome membrane. The protein resides in the cell membrane. It is found in the nucleus. The protein localises to the cleavage furrow. In terms of biological role, mediates apoptosis in neoplastically transformed cells after DNA damage. Not essential for development but affects cell adhesion and growth factor signaling in transformed cells. Plays a negative role in tumorigenesis as deletion causes tumor formation. Involved in intracellular protein trafficking of a number of proteins. Targets PKN1 to endosomes and is involved in trafficking of the EGF receptor from late endosomes to lysosomes. Also required for stability and nuclear trafficking of AKT1/AKT which promotes endothelial cell survival during vascular development. Serves as a microtubule-dependent signal that is required for the myosin contractile ring formation during cell cycle cytokinesis. Required for genotoxic stress-induced cell death in breast cancer cells. The protein is Rho-related GTP-binding protein RhoB (RHOB) of Homo sapiens (Human).